A 450-amino-acid polypeptide reads, in one-letter code: Plasminogen-binding protein PgbA (450 aa).

3 stretches are compositionally biased toward basic and acidic residues: residues 262–273 (EIKQEAIKEPKK), 284–310 (LEEK…DERK), and 317–362 (KAME…REIN). Positions 262-450 (EIKQEAIKEP…RRKALEMNKK (189 aa)) are disordered. Over residues 363-386 (QESANEPSSENNATLKDTENTSVL) the composition is skewed to polar residues. Residues 389-450 (SAAKKEAPKP…RRKALEMNKK (62 aa)) are compositionally biased toward basic and acidic residues.

Its subcellular location is the cell surface. Binds plasminogen, specifically, and in a concentration and lysine-dependent manner. Plasminogen is the precursor of plasmin, a serine protease that cleaves fibrin, fibronectin, laminin and vitronectin. Acquisition of plasminogen/plasmin could enable H.pylori to degrade host components. The chain is Plasminogen-binding protein PgbA (pgbA) from Helicobacter pylori (strain J99 / ATCC 700824) (Campylobacter pylori J99).